Consider the following 699-residue polypeptide: Elongation factor G (699 aa).

The region spanning 10-292 is the tr-type G domain; it reads NRTRNIGIMA…AVIDYLPSPT (283 aa). Residues 19–26, 90–94, and 144–147 contribute to the GTP site; these read AHIDAGKT, DTPGH, and NKMD. Residues 292-312 form a disordered region; that stretch reads TDVPAIRGEEDDGSEGSRSAS.

This sequence belongs to the TRAFAC class translation factor GTPase superfamily. Classic translation factor GTPase family. EF-G/EF-2 subfamily.

It localises to the cytoplasm. Catalyzes the GTP-dependent ribosomal translocation step during translation elongation. During this step, the ribosome changes from the pre-translocational (PRE) to the post-translocational (POST) state as the newly formed A-site-bound peptidyl-tRNA and P-site-bound deacylated tRNA move to the P and E sites, respectively. Catalyzes the coordinated movement of the two tRNA molecules, the mRNA and conformational changes in the ribosome. The polypeptide is Elongation factor G (Coxiella burnetii (strain RSA 331 / Henzerling II)).